We begin with the raw amino-acid sequence, 82 residues long: Large ribosomal subunit protein uL23 (82 aa).

Belongs to the universal ribosomal protein uL23 family. Part of the 50S ribosomal subunit. Contacts protein L29.

Its function is as follows. Binds to 23S rRNA. One of the proteins that surrounds the polypeptide exit tunnel on the outside of the ribosome. The protein is Large ribosomal subunit protein uL23 of Picrophilus torridus (strain ATCC 700027 / DSM 9790 / JCM 10055 / NBRC 100828 / KAW 2/3).